The primary structure comprises 355 residues: Peptide chain release factor 1 (355 aa).

An N5-methylglutamine modification is found at Q231.

The protein belongs to the prokaryotic/mitochondrial release factor family. In terms of processing, methylated by PrmC. Methylation increases the termination efficiency of RF1.

The protein localises to the cytoplasm. Its function is as follows. Peptide chain release factor 1 directs the termination of translation in response to the peptide chain termination codons UAG and UAA. The protein is Peptide chain release factor 1 of Aliarcobacter butzleri (strain RM4018) (Arcobacter butzleri).